The sequence spans 1434 residues: Receptor-type tyrosine-protein phosphatase U (1434 aa).

An N-terminal signal peptide occupies residues 1-17; that stretch reads MRSARALLLALALRVCA. Topologically, residues 18–748 are extracellular; it reads LDSETPSAGC…QHSEEMGLIL (731 aa). An MAM domain is found at 25–187; the sequence is AGCTFEEDDD…ILLLNYPCSK (163 aa). Residue Asn-74 is glycosylated (N-linked (GlcNAc...) asparagine). Residues 189-274 enclose the Ig-like C2-type domain; the sequence is PHFSRLGDVE…TQSSRGSGVS (86 aa). Cys-209 and Cys-263 are oxidised to a cystine. Fibronectin type-III domains follow at residues 287 to 382, 385 to 483, 484 to 590, and 597 to 677; these read PIAP…CAEP, APKG…TDED, VPGG…SAPT, and PSPL…TEAK. Asn-409 carries N-linked (GlcNAc...) asparagine glycosylation. The N-linked (GlcNAc...) asparagine glycan is linked to Asn-684. The chain crosses the membrane as a helical span at residues 749–769; that stretch reads GICAGGLVVLIILLGAIIVVI. Over 770–1434 the chain is Cytoplasmic; that stretch reads RKGKPVNMTK…LEYLESLETR (665 aa). Polar residues predominate over residues 824-839; sequence RGDQRSSVVNESSSLL. The interval 824-851 is disordered; that stretch reads RGDQRSSVVNESSSLLGGSPRRQCGRKG. 2 consecutive Tyrosine-protein phosphatase domains span residues 876-1132 and 1164-1427; these read KTAE…ILEA and LREE…ALEY. Substrate-binding positions include Glu-1041, 1073-1079, and Gln-1117; that span reads CSAGTGR. The active-site Phosphocysteine intermediate is Cys-1073. The active-site Phosphocysteine intermediate is the Cys-1368.

Belongs to the protein-tyrosine phosphatase family. Receptor class 2B subfamily.

Its subcellular location is the cell junction. The protein localises to the cell membrane. It carries out the reaction O-phospho-L-tyrosyl-[protein] + H2O = L-tyrosyl-[protein] + phosphate. Functionally, tyrosine-protein phosphatase which dephosphorylates CTNNB1. May function in cell proliferation and migration and play a role in the maintenance of epithelial integrity. In Gallus gallus (Chicken), this protein is Receptor-type tyrosine-protein phosphatase U (PTPRU).